Here is a 537-residue protein sequence, read N- to C-terminus: RNA polymerase sigma-54 factor 2 (537 aa).

A disordered region spans residues 52–90 (ANDEASGGEAPAEAGQFSDSDGGHNDEPGGGPGEAFEPG). Residues 55–66 (EASGGEAPAEAG) show a composition bias toward low complexity. Residues 403 to 422 (NLKAVADAIQMHESTVSRVT) constitute a DNA-binding region (H-T-H motif). The RPON box motif lies at 492 to 500 (ARRTVAKYR). The tract at residues 507–537 (SSVQRRRDKQSALGNVLSTAMSDRSRNPEPA) is disordered. Over residues 518-528 (ALGNVLSTAMS) the composition is skewed to polar residues.

The protein belongs to the sigma-54 factor family.

In terms of biological role, sigma factors are initiation factors that promote the attachment of RNA polymerase to specific initiation sites and are then released. This sigma factor is responsible for the expression of the nitrogen fixation genes. In Bradyrhizobium diazoefficiens (strain JCM 10833 / BCRC 13528 / IAM 13628 / NBRC 14792 / USDA 110), this protein is RNA polymerase sigma-54 factor 2 (rpoN2).